Here is a 252-residue protein sequence, read N- to C-terminus: Phosphoglycolate phosphatase (252 aa).

Residue Asp-13 is the Nucleophile of the active site. 3 residues coordinate Mg(2+): Asp-13, Asp-15, and Asp-192.

It belongs to the HAD-like hydrolase superfamily. CbbY/CbbZ/Gph/YieH family. Monomer. Mg(2+) is required as a cofactor. Chloride serves as cofactor.

The catalysed reaction is 2-phosphoglycolate + H2O = glycolate + phosphate. It participates in organic acid metabolism; glycolate biosynthesis; glycolate from 2-phosphoglycolate: step 1/1. Functionally, specifically catalyzes the dephosphorylation of 2-phosphoglycolate. Is involved in the dissimilation of the intracellular 2-phosphoglycolate formed during the DNA repair of 3'-phosphoglycolate ends, a major class of DNA lesions induced by oxidative stress. The protein is Phosphoglycolate phosphatase of Shigella flexneri.